Here is a 94-residue protein sequence, read N- to C-terminus: Pyrimidine/purine nucleoside phosphorylase 2 (94 aa).

It belongs to the nucleoside phosphorylase PpnP family.

The enzyme catalyses a purine D-ribonucleoside + phosphate = a purine nucleobase + alpha-D-ribose 1-phosphate. The catalysed reaction is adenosine + phosphate = alpha-D-ribose 1-phosphate + adenine. It catalyses the reaction cytidine + phosphate = cytosine + alpha-D-ribose 1-phosphate. It carries out the reaction guanosine + phosphate = alpha-D-ribose 1-phosphate + guanine. The enzyme catalyses inosine + phosphate = alpha-D-ribose 1-phosphate + hypoxanthine. The catalysed reaction is thymidine + phosphate = 2-deoxy-alpha-D-ribose 1-phosphate + thymine. It catalyses the reaction uridine + phosphate = alpha-D-ribose 1-phosphate + uracil. It carries out the reaction xanthosine + phosphate = alpha-D-ribose 1-phosphate + xanthine. Functionally, catalyzes the phosphorolysis of diverse nucleosides, yielding D-ribose 1-phosphate and the respective free bases. Can use uridine, adenosine, guanosine, cytidine, thymidine, inosine and xanthosine as substrates. Also catalyzes the reverse reactions. The sequence is that of Pyrimidine/purine nucleoside phosphorylase 2 from Psychrobacter arcticus (strain DSM 17307 / VKM B-2377 / 273-4).